The following is a 238-amino-acid chain: Glycerol-3-phosphate acyltransferase (238 aa).

6 consecutive transmembrane segments (helical) span residues 5–25 (VIFG…SINF), 61–81 (FLVF…SAIL), 88–108 (FGAV…VFPI), 125–145 (IASL…AMIF), 149–169 (IVSL…IIPW), and 194–214 (AWYL…FTHI).

It belongs to the PlsY family. In terms of assembly, probably interacts with PlsX.

The protein resides in the cell membrane. It carries out the reaction an acyl phosphate + sn-glycerol 3-phosphate = a 1-acyl-sn-glycero-3-phosphate + phosphate. The protein operates within lipid metabolism; phospholipid metabolism. Functionally, catalyzes the transfer of an acyl group from acyl-phosphate (acyl-PO(4)) to glycerol-3-phosphate (G3P) to form lysophosphatidic acid (LPA). This enzyme utilizes acyl-phosphate as fatty acyl donor, but not acyl-CoA or acyl-ACP. The chain is Glycerol-3-phosphate acyltransferase from Mycoplasma mobile (strain ATCC 43663 / 163K / NCTC 11711) (Mesomycoplasma mobile).